We begin with the raw amino-acid sequence, 219 residues long: MSIQVFCDFDGTITNNDNIMSIMEKFAPPEAEEVKNRILSQELSIQEGVSQLFRLIPTHLHDEIIQFLIETAELRNGFHEFIQFVNENNISFYVISGGMDFFVYPLLQGLIPKEQIYCNETDFSNEYITVNWPHPCDHHCQNHCGLCKSSLIRKLSDTNDFHIVIGDSITDLQAAKQADKVFARDFLITKCAENYIAYTPFETFHDIQNELKHLLEVKS.

It belongs to the HAD-like hydrolase superfamily. MtnX family.

The catalysed reaction is 2-hydroxy-5-methylsulfanyl-3-oxopent-1-enyl phosphate + H2O = 1,2-dihydroxy-5-(methylsulfanyl)pent-1-en-3-one + phosphate. The protein operates within amino-acid biosynthesis; L-methionine biosynthesis via salvage pathway; L-methionine from S-methyl-5-thio-alpha-D-ribose 1-phosphate: step 4/6. Its function is as follows. Dephosphorylates 2-hydroxy-3-keto-5-methylthiopentenyl-1-phosphate (HK-MTPenyl-1-P) yielding 1,2-dihydroxy-3-keto-5-methylthiopentene (DHK-MTPene). The sequence is that of 2-hydroxy-3-keto-5-methylthiopentenyl-1-phosphate phosphatase from Bacillus cereus (strain G9842).